Consider the following 369-residue polypeptide: Methionine import ATP-binding protein MetN 1 (369 aa).

A disordered region spans residues 1-26 (MTTMTVPPSLLPLEPFPTAPDTRAST). Positions 29 to 265 (IRLHGLGKRY…PRHAVTRSLL (237 aa)) constitute an ABC transporter domain. 62–69 (GRSGAGKS) contributes to the ATP binding site.

This sequence belongs to the ABC transporter superfamily. Methionine importer (TC 3.A.1.24) family. As to quaternary structure, the complex is composed of two ATP-binding proteins (MetN), two transmembrane proteins (MetI) and a solute-binding protein (MetQ).

It localises to the cell inner membrane. The catalysed reaction is L-methionine(out) + ATP + H2O = L-methionine(in) + ADP + phosphate + H(+). It carries out the reaction D-methionine(out) + ATP + H2O = D-methionine(in) + ADP + phosphate + H(+). Functionally, part of the ABC transporter complex MetNIQ involved in methionine import. Responsible for energy coupling to the transport system. This chain is Methionine import ATP-binding protein MetN 1, found in Pseudomonas aeruginosa (strain UCBPP-PA14).